The sequence spans 910 residues: Putative coatomer subunit beta'-3 (910 aa).

9 WD repeats span residues 13 to 52 (QRSE…MVKS), 55 to 94 (VTEL…KVKV), 97 to 136 (AHTD…MCTQ), 140 to 180 (GHSH…PNFT), 183 to 224 (GHSK…CVQT), 227 to 266 (GHAH…LENT), 269 to 309 (YGLE…ASMD), 351 to 393 (TCDL…GSAL), and 461 to 501 (RIDV…SHLD). The segment covering 865–884 (ENGVEESQEDAVEVDVEADG) has biased composition (acidic residues). Residues 865–910 (ENGVEESQEDAVEVDVEADGSTDGTVLVNGNDTEEQWGTNNEESLA) are disordered. Over residues 886–910 (TDGTVLVNGNDTEEQWGTNNEESLA) the composition is skewed to polar residues.

Belongs to the WD repeat COPB2 family. As to quaternary structure, oligomeric complex that consists of at least the alpha, beta, beta', gamma, delta, epsilon and zeta subunits.

The protein resides in the cytoplasm. Its subcellular location is the golgi apparatus membrane. It localises to the cytoplasmic vesicle. The protein localises to the COPI-coated vesicle membrane. In terms of biological role, the coatomer is a cytosolic protein complex that binds to dilysine motifs and reversibly associates with Golgi non-clathrin-coated vesicles, which further mediate biosynthetic protein transport from the ER, via the Golgi up to the trans Golgi network. Coatomer complex is required for budding from Golgi membranes, and is essential for the retrograde Golgi-to-ER transport of dilysine-tagged proteins. In Oryza sativa subsp. japonica (Rice), this protein is Putative coatomer subunit beta'-3.